We begin with the raw amino-acid sequence, 533 residues long: Bifunctional purine biosynthesis protein PurH (533 aa).

The 148-residue stretch at 1–148 (MQPNRPIRQA…KNHQDVAIVV (148 aa)) folds into the MGS-like domain.

This sequence belongs to the PurH family.

It carries out the reaction (6R)-10-formyltetrahydrofolate + 5-amino-1-(5-phospho-beta-D-ribosyl)imidazole-4-carboxamide = 5-formamido-1-(5-phospho-D-ribosyl)imidazole-4-carboxamide + (6S)-5,6,7,8-tetrahydrofolate. The enzyme catalyses IMP + H2O = 5-formamido-1-(5-phospho-D-ribosyl)imidazole-4-carboxamide. The protein operates within purine metabolism; IMP biosynthesis via de novo pathway; 5-formamido-1-(5-phospho-D-ribosyl)imidazole-4-carboxamide from 5-amino-1-(5-phospho-D-ribosyl)imidazole-4-carboxamide (10-formyl THF route): step 1/1. Its pathway is purine metabolism; IMP biosynthesis via de novo pathway; IMP from 5-formamido-1-(5-phospho-D-ribosyl)imidazole-4-carboxamide: step 1/1. The sequence is that of Bifunctional purine biosynthesis protein PurH from Pasteurella multocida (strain Pm70).